A 380-amino-acid polypeptide reads, in one-letter code: 1-deoxy-D-xylulose 5-phosphate reductoisomerase (380 aa).

8 residues coordinate NADPH: Thr-10, Gly-11, Ser-12, Ile-13, Gly-36, Arg-37, Asn-38, and Asn-120. Lys-121 serves as a coordination point for 1-deoxy-D-xylulose 5-phosphate. NADPH is bound at residue Glu-122. Residue Asp-146 coordinates Mn(2+). Residues Ser-147, Glu-148, Ser-172, and His-195 each contribute to the 1-deoxy-D-xylulose 5-phosphate site. Glu-148 is a Mn(2+) binding site. Position 201 (Gly-201) interacts with NADPH. Positions 208, 213, 214, and 217 each coordinate 1-deoxy-D-xylulose 5-phosphate. Residue Glu-217 participates in Mn(2+) binding.

The protein belongs to the DXR family. Mg(2+) is required as a cofactor. Requires Mn(2+) as cofactor.

It catalyses the reaction 2-C-methyl-D-erythritol 4-phosphate + NADP(+) = 1-deoxy-D-xylulose 5-phosphate + NADPH + H(+). It functions in the pathway isoprenoid biosynthesis; isopentenyl diphosphate biosynthesis via DXP pathway; isopentenyl diphosphate from 1-deoxy-D-xylulose 5-phosphate: step 1/6. Functionally, catalyzes the NADPH-dependent rearrangement and reduction of 1-deoxy-D-xylulose-5-phosphate (DXP) to 2-C-methyl-D-erythritol 4-phosphate (MEP). This chain is 1-deoxy-D-xylulose 5-phosphate reductoisomerase, found in Listeria innocua serovar 6a (strain ATCC BAA-680 / CLIP 11262).